Here is a 95-residue protein sequence, read N- to C-terminus: MSRSIKKGPFADASLLKKIEAQEGSEKKQVIKTWSRRSTIFPSFVGFTIAVYDGRKHVPVYITEDMVGHKLGEFVPTRTFRGHKVADKATTTVGK.

This sequence belongs to the universal ribosomal protein uS19 family.

Functionally, protein S19 forms a complex with S13 that binds strongly to the 16S ribosomal RNA. The polypeptide is Small ribosomal subunit protein uS19 (Lactobacillus gasseri (strain ATCC 33323 / DSM 20243 / BCRC 14619 / CIP 102991 / JCM 1131 / KCTC 3163 / NCIMB 11718 / NCTC 13722 / AM63)).